Reading from the N-terminus, the 189-residue chain is GTP cyclohydrolase 1 (189 aa).

Residues Cys-78, His-81, and Cys-150 each contribute to the Zn(2+) site.

This sequence belongs to the GTP cyclohydrolase I family. As to quaternary structure, homomer.

It carries out the reaction GTP + H2O = 7,8-dihydroneopterin 3'-triphosphate + formate + H(+). Its pathway is cofactor biosynthesis; 7,8-dihydroneopterin triphosphate biosynthesis; 7,8-dihydroneopterin triphosphate from GTP: step 1/1. This chain is GTP cyclohydrolase 1, found in Listeria monocytogenes serotype 4b (strain CLIP80459).